Consider the following 236-residue polypeptide: tRNA1(Val) (adenine(37)-N6)-methyltransferase (236 aa).

Belongs to the methyltransferase superfamily. tRNA (adenine-N(6)-)-methyltransferase family.

It is found in the cytoplasm. It carries out the reaction adenosine(37) in tRNA1(Val) + S-adenosyl-L-methionine = N(6)-methyladenosine(37) in tRNA1(Val) + S-adenosyl-L-homocysteine + H(+). In terms of biological role, specifically methylates the adenine in position 37 of tRNA(1)(Val) (anticodon cmo5UAC). The sequence is that of tRNA1(Val) (adenine(37)-N6)-methyltransferase from Histophilus somni (strain 2336) (Haemophilus somnus).